The primary structure comprises 425 residues: Putative TRAP transporter large permease protein HI_1029 (425 aa).

Transmembrane regions (helical) follow at residues 3-23 (VIIF…VAFA), 24-44 (LLIC…QILA), 54-74 (FSLM…EGGL), 93-113 (LGFV…SAVA), 139-159 (LIGT…FIVF), 169-189 (KLFL…AILW), 217-237 (VWAL…IFTP), 241-261 (GVVA…ELPL), 275-295 (TAVV…ITVA), 312-332 (PTIL…VMDL), 334-354 (PTVL…GIDP), 355-375 (VYFG…PPVG), and 399-419 (YLGM…LILM).

It belongs to the TRAP transporter large permease family.

It localises to the cell inner membrane. In Haemophilus influenzae (strain ATCC 51907 / DSM 11121 / KW20 / Rd), this protein is Putative TRAP transporter large permease protein HI_1029.